Here is a 764-residue protein sequence, read N- to C-terminus: Myotubularin-related protein 10-B (764 aa).

One can recognise a Myotubularin phosphatase domain in the interval F208–Y649.

It belongs to the protein-tyrosine phosphatase family. Non-receptor class myotubularin subfamily.

In Xenopus laevis (African clawed frog), this protein is Myotubularin-related protein 10-B (mtmr10-b).